The sequence spans 637 residues: Phosphomethylpyrimidine synthase (637 aa).

Substrate-binding positions include Asn-242, Met-271, Tyr-300, His-336, 356–358 (SRG), 397–400 (DGLR), and Glu-436. Residue His-440 participates in Zn(2+) binding. Tyr-463 provides a ligand contact to substrate. His-504 is a Zn(2+) binding site. The [4Fe-4S] cluster site is built by Cys-584, Cys-587, and Cys-592.

This sequence belongs to the ThiC family. As to quaternary structure, homodimer. Requires [4Fe-4S] cluster as cofactor.

The catalysed reaction is 5-amino-1-(5-phospho-beta-D-ribosyl)imidazole + S-adenosyl-L-methionine = 4-amino-2-methyl-5-(phosphooxymethyl)pyrimidine + CO + 5'-deoxyadenosine + formate + L-methionine + 3 H(+). The protein operates within cofactor biosynthesis; thiamine diphosphate biosynthesis. Its function is as follows. Catalyzes the synthesis of the hydroxymethylpyrimidine phosphate (HMP-P) moiety of thiamine from aminoimidazole ribotide (AIR) in a radical S-adenosyl-L-methionine (SAM)-dependent reaction. This is Phosphomethylpyrimidine synthase from Bordetella bronchiseptica (strain ATCC BAA-588 / NCTC 13252 / RB50) (Alcaligenes bronchisepticus).